The chain runs to 191 residues: Small ribosomal subunit protein bS6 (191 aa).

Residues 168-191 (KVNLTRKPTPNKSSENKQKVEKQA) form a disordered region. Residues 181 to 191 (SENKQKVEKQA) show a composition bias toward basic and acidic residues.

The protein belongs to the bacterial ribosomal protein bS6 family.

Its function is as follows. Binds together with bS18 to 16S ribosomal RNA. The protein is Small ribosomal subunit protein bS6 of Mycoplasmoides gallisepticum (strain R(low / passage 15 / clone 2)) (Mycoplasma gallisepticum).